A 78-amino-acid polypeptide reads, in one-letter code: Acyl carrier protein (78 aa).

The 76-residue stretch at 2 to 77 folds into the Carrier domain; it reads SDSAEKVKKI…DAIDYIEANK (76 aa). Serine 37 is subject to O-(pantetheine 4'-phosphoryl)serine.

Belongs to the acyl carrier protein (ACP) family. 4'-phosphopantetheine is transferred from CoA to a specific serine of apo-ACP by AcpS. This modification is essential for activity because fatty acids are bound in thioester linkage to the sulfhydryl of the prosthetic group.

It localises to the cytoplasm. It participates in lipid metabolism; fatty acid biosynthesis. Carrier of the growing fatty acid chain in fatty acid biosynthesis. The protein is Acyl carrier protein of Sphingopyxis alaskensis (strain DSM 13593 / LMG 18877 / RB2256) (Sphingomonas alaskensis).